The following is a 210-amino-acid chain: Putative methyltransferase ECU09_1500 (210 aa).

Belongs to the methyltransferase superfamily.

This Encephalitozoon cuniculi (strain GB-M1) (Microsporidian parasite) protein is Putative methyltransferase ECU09_1500.